Consider the following 271-residue polypeptide: Large ribosomal subunit protein uL2cz/uL2cy (271 aa).

Disordered regions lie at residues 1-22 and 223-271; these read MAKH…DRQV and PVDH…RRRK.

The protein belongs to the universal ribosomal protein uL2 family. In terms of assembly, part of the 50S ribosomal subunit.

The protein resides in the plastid. The protein localises to the chloroplast. This Sorghum bicolor (Sorghum) protein is Large ribosomal subunit protein uL2cz/uL2cy (rpl2-A).